A 470-amino-acid polypeptide reads, in one-letter code: Glucose-1-phosphate adenylyltransferase (470 aa).

Alpha-D-glucose 1-phosphate-binding positions include Gly-165, 182-183, and Ser-200; that span reads EK.

It belongs to the bacterial/plant glucose-1-phosphate adenylyltransferase family. As to quaternary structure, homotetramer.

The catalysed reaction is alpha-D-glucose 1-phosphate + ATP + H(+) = ADP-alpha-D-glucose + diphosphate. Its pathway is glycan biosynthesis; glycogen biosynthesis. Its function is as follows. Involved in the biosynthesis of ADP-glucose, a building block required for the elongation reactions to produce glycogen. Catalyzes the reaction between ATP and alpha-D-glucose 1-phosphate (G1P) to produce pyrophosphate and ADP-Glc. The polypeptide is Glucose-1-phosphate adenylyltransferase (Paenarthrobacter aurescens (strain TC1)).